A 238-amino-acid chain; its full sequence is Uridylate kinase (238 aa).

ATP is bound at residue 12–15 (KLSG). A UMP-binding site is contributed by glycine 54. 2 residues coordinate ATP: glycine 55 and arginine 59. UMP is bound by residues aspartate 74 and 135–142 (TGNPFFTT). Residues threonine 162, tyrosine 168, and aspartate 171 each contribute to the ATP site.

This sequence belongs to the UMP kinase family. As to quaternary structure, homohexamer.

The protein localises to the cytoplasm. It catalyses the reaction UMP + ATP = UDP + ADP. Its pathway is pyrimidine metabolism; CTP biosynthesis via de novo pathway; UDP from UMP (UMPK route): step 1/1. Inhibited by UTP. Its function is as follows. Catalyzes the reversible phosphorylation of UMP to UDP. The chain is Uridylate kinase from Azoarcus sp. (strain BH72).